Consider the following 681-residue polypeptide: DNA-directed RNA polymerase subunit beta' (681 aa).

Zn(2+) is bound by residues Cys69, Cys71, Cys87, and Cys90. Mg(2+) is bound by residues Asp489, Asp491, and Asp493.

It belongs to the RNA polymerase beta' chain family. RpoC1 subfamily. As to quaternary structure, in plastids the minimal PEP RNA polymerase catalytic core is composed of four subunits: alpha, beta, beta', and beta''. When a (nuclear-encoded) sigma factor is associated with the core the holoenzyme is formed, which can initiate transcription. Requires Mg(2+) as cofactor. It depends on Zn(2+) as a cofactor.

The protein localises to the plastid. The protein resides in the chloroplast. The catalysed reaction is RNA(n) + a ribonucleoside 5'-triphosphate = RNA(n+1) + diphosphate. In terms of biological role, DNA-dependent RNA polymerase catalyzes the transcription of DNA into RNA using the four ribonucleoside triphosphates as substrates. The protein is DNA-directed RNA polymerase subunit beta' of Solanum bulbocastanum (Wild potato).